The primary structure comprises 175 residues: Cytochrome c-550-like protein (175 aa).

Positions 1-34 are cleaved as a signal peptide; sequence MYQPHFWQRSIGWLCGGLLILLLGWTIAPATALA. C81, C84, H85, and C135 together coordinate heme c.

Belongs to the cytochrome c family. PsbV subfamily. Requires heme c as cofactor.

Its subcellular location is the cellular thylakoid membrane. Functionally, probable low-potential cytochrome c, can partially replace cytochrome c-550 (PsbV) function. This is Cytochrome c-550-like protein from Thermosynechococcus vestitus (strain NIES-2133 / IAM M-273 / BP-1).